The following is a 336-amino-acid chain: Heme A synthase (336 aa).

The next 8 helical transmembrane spans lie at 12–32 (LKLW…VGGL), 97–117 (LLAR…TLYF), 130–150 (IFFL…SGLI), 161–181 (SIHL…ILDI), 194–214 (LFLL…AFLS), 256–276 (FLHR…NFIY), 285–305 (YVLF…ITLI), and 310–330 (ITYA…YFLI). His258 is a binding site for heme. Position 316 (His316) interacts with heme.

The protein belongs to the COX15/CtaA family. Type 2 subfamily. In terms of assembly, interacts with CtaB. It depends on heme b as a cofactor.

It is found in the cell membrane. The enzyme catalyses Fe(II)-heme o + 2 A + H2O = Fe(II)-heme a + 2 AH2. The protein operates within porphyrin-containing compound metabolism; heme A biosynthesis; heme A from heme O: step 1/1. In terms of biological role, catalyzes the conversion of heme O to heme A by two successive hydroxylations of the methyl group at C8. The first hydroxylation forms heme I, the second hydroxylation results in an unstable dihydroxymethyl group, which spontaneously dehydrates, resulting in the formyl group of heme A. This Pelagibacter ubique (strain HTCC1062) protein is Heme A synthase.